Reading from the N-terminus, the 85-residue chain is Cell division topological specificity factor (85 aa).

The protein belongs to the MinE family.

Functionally, prevents the cell division inhibition by proteins MinC and MinD at internal division sites while permitting inhibition at polar sites. This ensures cell division at the proper site by restricting the formation of a division septum at the midpoint of the long axis of the cell. The polypeptide is Cell division topological specificity factor (Xylella fastidiosa (strain M23)).